The following is a 719-amino-acid chain: Mini-chromosome maintenance complex-binding protein (719 aa).

Low complexity predominate over residues 152–174 (NNNNNNNNNNNNNNNNNNNNNNN). 3 disordered regions span residues 152 to 179 (NNNN…NEQI), 194 to 236 (ADMK…QLTK), and 375 to 416 (TINN…NNNN). Residues 194–211 (ADMKNENDEENKKSKDQK) are compositionally biased toward basic and acidic residues. 2 stretches are compositionally biased toward low complexity: residues 212 to 221 (STTTTTTTTS) and 377 to 416 (NNNN…NNNN).

It belongs to the MCMBP family. As to quaternary structure, interacts with the MCM complex.

It is found in the nucleus. Associated component of the MCM complex that acts as a regulator of DNA replication. Binds to the MCM complex during late S phase and may act by promoting the disassembly of the MCM complex from chromatin. The chain is Mini-chromosome maintenance complex-binding protein (mcmbp) from Dictyostelium discoideum (Social amoeba).